Here is a 332-residue protein sequence, read N- to C-terminus: L-lactate dehydrogenase A chain (332 aa).

The residue at position 2 (Ala2) is an N-acetylalanine. Lys5 is modified (N6-acetyllysine; alternate). N6-succinyllysine; alternate is present on Lys5. The residue at position 14 (Lys14) is an N6-acetyllysine. 29-57 provides a ligand contact to NAD(+); sequence GAVGMACAISILMKDLADELALVDVMEDK. The residue at position 57 (Lys57) is an N6-acetyllysine; alternate. Lys57 participates in a covalent cross-link: Glycyl lysine isopeptide (Lys-Gly) (interchain with G-Cter in SUMO2); alternate. Lys81 is modified (N6-acetyllysine). Residue Arg99 coordinates NAD(+). Arg106 contributes to the substrate binding site. At Lys118 the chain carries N6-acetyllysine; alternate. Lys118 carries the post-translational modification N6-succinyllysine; alternate. N6-acetyllysine is present on Lys126. Residue Asn138 coordinates NAD(+). Asn138 and Arg169 together coordinate substrate. His193 acts as the Proton acceptor in catalysis. Residues Lys224 and Lys232 each carry the N6-acetyllysine modification. A Phosphotyrosine modification is found at Tyr239. Lys243 is subject to N6-acetyllysine. Substrate is bound at residue Thr248. Thr309 bears the Phosphothreonine mark. Lys318 is subject to N6-acetyllysine; alternate. Lys318 is subject to N6-succinyllysine; alternate. Residue Thr322 is modified to Phosphothreonine.

Belongs to the LDH/MDH superfamily. LDH family. As to quaternary structure, homotetramer. Interacts with PTEN upstream reading frame protein MP31. In terms of processing, ISGylated.

The protein localises to the cytoplasm. It carries out the reaction (S)-lactate + NAD(+) = pyruvate + NADH + H(+). It participates in fermentation; pyruvate fermentation to lactate; (S)-lactate from pyruvate: step 1/1. In terms of biological role, interconverts simultaneously and stereospecifically pyruvate and lactate with concomitant interconversion of NADH and NAD(+). The protein is L-lactate dehydrogenase A chain (Ldha) of Mus musculus (Mouse).